The primary structure comprises 264 residues: Phosphonoacetaldehyde hydrolase (264 aa).

The active-site Nucleophile is D9. Mg(2+) is bound by residues D9 and A11. The active-site Schiff-base intermediate with substrate is the K50. D183 provides a ligand contact to Mg(2+).

The protein belongs to the HAD-like hydrolase superfamily. PhnX family. In terms of assembly, homodimer. The cofactor is Mg(2+).

It carries out the reaction phosphonoacetaldehyde + H2O = acetaldehyde + phosphate + H(+). Involved in phosphonate degradation. This chain is Phosphonoacetaldehyde hydrolase (phnX), found in Bacillus cereus.